Here is a 185-residue protein sequence, read N- to C-terminus: Comitin (185 aa).

A Bulb-type lectin domain is found at 1–123 (MELLRQGEHL…YKQILYSSKP (123 aa)). A disordered region spans residues 138–185 (SGHPQSAYPPQQPGYGYPAQPGYPPQPGYPPQHGYPPQHGYPQQPGYY). Residues 141–157 (PQSAYPPQQPGYGYPAQ) show a composition bias toward low complexity. 5 tandem repeats follow at residues 153–158 (GYPAQP), 159–164 (GYPPQP), 165–170 (GYPPQH), 171–176 (GYPPQH), and 177–182 (GYPQQP). Positions 153–182 (GYPAQPGYPPQPGYPPQHGYPPQHGYPQQP) are 5 X 6 AA tandem repeats of G-Y-P-X-Q-[PH]. Pro residues predominate over residues 158-171 (PGYPPQPGYPPQHG). Low complexity predominate over residues 172 to 185 (YPPQHGYPQQPGYY).

Homodimer in solution. The N-terminus is blocked.

The protein resides in the golgi apparatus membrane. It localises to the endomembrane system. The protein localises to the cytoplasm. Its subcellular location is the cytoskeleton. May have a role in cell motility. It has high affinity for both G-actin and F-actin. Binds to vesicle membranes via mannose residues and, by way of its interaction with actin, links these membranes to the cytoskeleton. The sequence is that of Comitin (comA) from Dictyostelium discoideum (Social amoeba).